A 41-amino-acid polypeptide reads, in one-letter code: Urotensin-1 (41 aa).

At Val41 the chain carries Valine amide.

It belongs to the sauvagine/corticotropin-releasing factor/urotensin I family.

The protein resides in the secreted. Its function is as follows. Urotensin is found in the teleost caudal neurosecretory system. It has a suggested role in osmoregulation and as a corticotropin-releasing factor. The polypeptide is Urotensin-1 (Catostomus commersonii (White sucker)).